We begin with the raw amino-acid sequence, 474 residues long: MTKEDWEAVIGLEVHAQVSSNTKLFSSSSTEFGAEHNTQVSLVDAAMPGTLPILNYYCIEQAIRTGLALSAEINKYSYFDRKNYFYPDLPQGYQITQFFEPIVKNGRVFINDNEKEIRIARIHLEQDAGKSVHEESKTYVDLNRAGVALMEIVSEPDLRSSAEAAECMKKLRQILRYIGSCDGDMEKGSLRCDANVSVRLKGSSTFGTRCEIKNLNSIRYIVQAIDYEIQRQIEILESGEEISQDTLLFDVASGKTKVMRSKEDASDYRYFPEPDLLPVEVSQDKIDLIQSSLPELPDQKKLRYIEELGINEYDANVITSDKAIADYFEELIKKHDSKLAVTWLTVELFGRLNKAGIDIVSSPIKANALSELLDFIVDGTISAKLGKQVFDSMFETGKPASLIIEEQGLKQITDRGQISEVIDKIINNNQDKVQEYKSGKTKLYGFFVGEVMKLTKGKASPDVVNSILSERLSN.

It belongs to the GatB/GatE family. GatB subfamily. Heterotrimer of A, B and C subunits.

The catalysed reaction is L-glutamyl-tRNA(Gln) + L-glutamine + ATP + H2O = L-glutaminyl-tRNA(Gln) + L-glutamate + ADP + phosphate + H(+). It catalyses the reaction L-aspartyl-tRNA(Asn) + L-glutamine + ATP + H2O = L-asparaginyl-tRNA(Asn) + L-glutamate + ADP + phosphate + 2 H(+). In terms of biological role, allows the formation of correctly charged Asn-tRNA(Asn) or Gln-tRNA(Gln) through the transamidation of misacylated Asp-tRNA(Asn) or Glu-tRNA(Gln) in organisms which lack either or both of asparaginyl-tRNA or glutaminyl-tRNA synthetases. The reaction takes place in the presence of glutamine and ATP through an activated phospho-Asp-tRNA(Asn) or phospho-Glu-tRNA(Gln). This Wolbachia pipientis wMel protein is Aspartyl/glutamyl-tRNA(Asn/Gln) amidotransferase subunit B.